Consider the following 267-residue polypeptide: MKVGIDAGGTLIKIVQEQDNQRTFKTELTKNIDQVVEWLNQQQIEKLCLTGGNAGVIAENINIPAQIFVEFDAASQGLGILLKEQGHDLADYIFANVGTGTSLHYFDGQSQRRVGGIGTGGGMIQGLGYLLSQITDYKQLTDMAQHGDRNTIDLKVRHIYKDTEPPIPGDLTAANFGHVLHHLDADFTPSNKLAAVIGVVGEVVTTMAITVAREFKTENIVYIGSSFHNNALLRKVVEDYTVLRGCKPYYVENGAFSGAIGALYLEK.

Position 6-13 (6-13 (DAGGTLIK)) interacts with ATP. E70 acts as the Proton acceptor in catalysis. ATP-binding positions include T99, 121–125 (GGMIQ), Y137, and S225.

This sequence belongs to the type II pantothenate kinase family. In terms of assembly, homodimer.

It is found in the cytoplasm. The catalysed reaction is (R)-pantothenate + ATP = (R)-4'-phosphopantothenate + ADP + H(+). It participates in cofactor biosynthesis; coenzyme A biosynthesis; CoA from (R)-pantothenate: step 1/5. Its function is as follows. Catalyzes the phosphorylation of pantothenate (Pan), the first step in CoA biosynthesis. This Staphylococcus aureus (strain USA300) protein is Type II pantothenate kinase.